The primary structure comprises 93 residues: Exodeoxyribonuclease 7 small subunit (93 aa).

Residues 61 to 75 show a composition bias toward basic and acidic residues; it reads IDDNGDEKVYEKQTD. The segment at 61-93 is disordered; it reads IDDNGDEKVYEKQTDDPSNNGGGNRGFGSADEQ.

It belongs to the XseB family. As to quaternary structure, heterooligomer composed of large and small subunits.

It is found in the cytoplasm. It catalyses the reaction Exonucleolytic cleavage in either 5'- to 3'- or 3'- to 5'-direction to yield nucleoside 5'-phosphates.. In terms of biological role, bidirectionally degrades single-stranded DNA into large acid-insoluble oligonucleotides, which are then degraded further into small acid-soluble oligonucleotides. The polypeptide is Exodeoxyribonuclease 7 small subunit (Limosilactobacillus reuteri (strain DSM 20016) (Lactobacillus reuteri)).